We begin with the raw amino-acid sequence, 204 residues long: Spermatogenesis-associated protein 46 (204 aa).

A disordered region spans residues 101-120 (SSSSQENTYPREANRKSKHG).

As to expression, testis-specific.

The protein localises to the nucleus membrane. In terms of biological role, plays a role in spermiogenesis and fertilization. This chain is Spermatogenesis-associated protein 46 (Spata46), found in Mus musculus (Mouse).